Here is a 509-residue protein sequence, read N- to C-terminus: ATP synthase subunit alpha (509 aa).

Residue 169–176 (GDRQTGKT) participates in ATP binding.

It belongs to the ATPase alpha/beta chains family. As to quaternary structure, F-type ATPases have 2 components, CF(1) - the catalytic core - and CF(0) - the membrane proton channel. CF(1) has five subunits: alpha(3), beta(3), gamma(1), delta(1), epsilon(1). CF(0) has three main subunits: a(1), b(2) and c(9-12). The alpha and beta chains form an alternating ring which encloses part of the gamma chain. CF(1) is attached to CF(0) by a central stalk formed by the gamma and epsilon chains, while a peripheral stalk is formed by the delta and b chains.

Its subcellular location is the cell inner membrane. The enzyme catalyses ATP + H2O + 4 H(+)(in) = ADP + phosphate + 5 H(+)(out). Its function is as follows. Produces ATP from ADP in the presence of a proton gradient across the membrane. The alpha chain is a regulatory subunit. The chain is ATP synthase subunit alpha from Paramagnetospirillum magneticum (strain ATCC 700264 / AMB-1) (Magnetospirillum magneticum).